The following is a 358-amino-acid chain: Protein-glutamate methylesterase/protein-glutamine glutaminase 1 (358 aa).

Residues 8 to 125 form the Response regulatory domain; it reads RVLIVDDSAV…ARGLEGYAEE (118 aa). D59 carries the post-translational modification 4-aspartylphosphate. In terms of domain architecture, CheB-type methylesterase spans 157-352; that stretch reads PVPGSALRFR…LERVAERLIA (196 aa). Active-site residues include S177, H203, and D299.

Belongs to the CheB family. Post-translationally, phosphorylated by CheA. Phosphorylation of the N-terminal regulatory domain activates the methylesterase activity.

It localises to the cytoplasm. The enzyme catalyses [protein]-L-glutamate 5-O-methyl ester + H2O = L-glutamyl-[protein] + methanol + H(+). The catalysed reaction is L-glutaminyl-[protein] + H2O = L-glutamyl-[protein] + NH4(+). Its function is as follows. Involved in chemotaxis. Part of a chemotaxis signal transduction system that modulates chemotaxis in response to various stimuli. Catalyzes the demethylation of specific methylglutamate residues introduced into the chemoreceptors (methyl-accepting chemotaxis proteins or MCP) by CheR. Also mediates the irreversible deamidation of specific glutamine residues to glutamic acid. In Xanthomonas campestris pv. campestris (strain ATCC 33913 / DSM 3586 / NCPPB 528 / LMG 568 / P 25), this protein is Protein-glutamate methylesterase/protein-glutamine glutaminase 1.